We begin with the raw amino-acid sequence, 393 residues long: S-adenosylmethionine synthase (393 aa).

An ATP-binding site is contributed by histidine 16. Aspartate 18 provides a ligand contact to Mg(2+). A K(+)-binding site is contributed by glutamate 44. 2 residues coordinate L-methionine: glutamate 57 and glutamine 100. The segment at 100-110 is flexible loop; sequence QSNDIAQGVDH. ATP contacts are provided by residues 167 to 169, 238 to 239, aspartate 247, 253 to 254, alanine 270, and lysine 274; these read DAK, RF, and RK. Aspartate 247 contacts L-methionine. Residue lysine 278 coordinates L-methionine.

Belongs to the AdoMet synthase family. As to quaternary structure, homotetramer; dimer of dimers. The cofactor is Mg(2+). K(+) is required as a cofactor.

It is found in the cytoplasm. It catalyses the reaction L-methionine + ATP + H2O = S-adenosyl-L-methionine + phosphate + diphosphate. The protein operates within amino-acid biosynthesis; S-adenosyl-L-methionine biosynthesis; S-adenosyl-L-methionine from L-methionine: step 1/1. Its function is as follows. Catalyzes the formation of S-adenosylmethionine (AdoMet) from methionine and ATP. The overall synthetic reaction is composed of two sequential steps, AdoMet formation and the subsequent tripolyphosphate hydrolysis which occurs prior to release of AdoMet from the enzyme. This Variovorax paradoxus (strain S110) protein is S-adenosylmethionine synthase.